The sequence spans 287 residues: Bifunctional protein FolD (287 aa).

NADP(+) contacts are provided by residues glycine 171 to serine 173, isoleucine 196, and isoleucine 237.

This sequence belongs to the tetrahydrofolate dehydrogenase/cyclohydrolase family. Homodimer.

It carries out the reaction (6R)-5,10-methylene-5,6,7,8-tetrahydrofolate + NADP(+) = (6R)-5,10-methenyltetrahydrofolate + NADPH. The catalysed reaction is (6R)-5,10-methenyltetrahydrofolate + H2O = (6R)-10-formyltetrahydrofolate + H(+). The protein operates within one-carbon metabolism; tetrahydrofolate interconversion. Its function is as follows. Catalyzes the oxidation of 5,10-methylenetetrahydrofolate to 5,10-methenyltetrahydrofolate and then the hydrolysis of 5,10-methenyltetrahydrofolate to 10-formyltetrahydrofolate. In Methanosarcina mazei (strain ATCC BAA-159 / DSM 3647 / Goe1 / Go1 / JCM 11833 / OCM 88) (Methanosarcina frisia), this protein is Bifunctional protein FolD.